Here is a 406-residue protein sequence, read N- to C-terminus: 4-hydroxy-3-methylbut-2-enyl diphosphate reductase (406 aa).

Cysteine 66 is a binding site for [4Fe-4S] cluster. Residue histidine 96 coordinates (2E)-4-hydroxy-3-methylbut-2-enyl diphosphate. Dimethylallyl diphosphate is bound at residue histidine 96. Isopentenyl diphosphate is bound at residue histidine 96. A [4Fe-4S] cluster-binding site is contributed by cysteine 157. Residue histidine 185 coordinates (2E)-4-hydroxy-3-methylbut-2-enyl diphosphate. Dimethylallyl diphosphate is bound at residue histidine 185. Histidine 185 lines the isopentenyl diphosphate pocket. Catalysis depends on glutamate 187, which acts as the Proton donor. (2E)-4-hydroxy-3-methylbut-2-enyl diphosphate is bound at residue threonine 250. A [4Fe-4S] cluster-binding site is contributed by cysteine 288. (2E)-4-hydroxy-3-methylbut-2-enyl diphosphate-binding residues include serine 317, serine 318, asparagine 319, and serine 379. Serine 317, serine 318, asparagine 319, and serine 379 together coordinate dimethylallyl diphosphate. Serine 317, serine 318, asparagine 319, and serine 379 together coordinate isopentenyl diphosphate.

It belongs to the IspH family. Requires [4Fe-4S] cluster as cofactor.

The enzyme catalyses isopentenyl diphosphate + 2 oxidized [2Fe-2S]-[ferredoxin] + H2O = (2E)-4-hydroxy-3-methylbut-2-enyl diphosphate + 2 reduced [2Fe-2S]-[ferredoxin] + 2 H(+). The catalysed reaction is dimethylallyl diphosphate + 2 oxidized [2Fe-2S]-[ferredoxin] + H2O = (2E)-4-hydroxy-3-methylbut-2-enyl diphosphate + 2 reduced [2Fe-2S]-[ferredoxin] + 2 H(+). It functions in the pathway isoprenoid biosynthesis; dimethylallyl diphosphate biosynthesis; dimethylallyl diphosphate from (2E)-4-hydroxy-3-methylbutenyl diphosphate: step 1/1. Its pathway is isoprenoid biosynthesis; isopentenyl diphosphate biosynthesis via DXP pathway; isopentenyl diphosphate from 1-deoxy-D-xylulose 5-phosphate: step 6/6. Functionally, catalyzes the conversion of 1-hydroxy-2-methyl-2-(E)-butenyl 4-diphosphate (HMBPP) into a mixture of isopentenyl diphosphate (IPP) and dimethylallyl diphosphate (DMAPP). Acts in the terminal step of the DOXP/MEP pathway for isoprenoid precursor biosynthesis. This Synechococcus sp. (strain RCC307) protein is 4-hydroxy-3-methylbut-2-enyl diphosphate reductase.